Here is a 398-residue protein sequence, read N- to C-terminus: Phospholipase C (398 aa).

The N-terminal stretch at 1 to 28 is a signal peptide; it reads MKRKICKALICATLATSLWAGASTKVYA. The Zn(2+) site is built by Trp29, His39, Asp84, His96, His154, Asp158, His164, His176, and Glu180. The region spanning 29–278 is the Zn-dependent PLC domain; it reads WDGKIDGTGT…HDVSEGNDPS (250 aa). The tract at residues 275-283 is linker; the sequence is NDPSVGKNV. The region spanning 284–398 is the PLAT domain; sequence KELVAYISTS…ISGNSTYNIK (115 aa). Ca(2+)-binding residues include Asp297, Gly299, Thr300, Asp301, Asp321, Asn322, Gly324, Asn325, Asp326, Asp364, and Ala365.

The protein belongs to the bacterial zinc-metallophospholipase C family. Ca(2+) serves as cofactor. It depends on Zn(2+) as a cofactor.

It localises to the secreted. The enzyme catalyses a 1,2-diacyl-sn-glycero-3-phosphocholine + H2O = phosphocholine + a 1,2-diacyl-sn-glycerol + H(+). Functionally, bacterial hemolysins are exotoxins that attack blood cell membranes and cause cell rupture. Constitutes an essential virulence factor in gas gangrene. Binds to eukaryotic membranes where it hydrolyzes both phosphatidylcholine and sphingomyelin. The diacylglycerol produced can activate both the arachidonic acid pathway, leading to modulation of the inflammatory response cascade and thrombosis, and protein kinase C, leading to activation of eukaryotic phospholipases and further membrane damage. Acts on human and mouse erythrocytes, but not on rabbit or horse erythrocytes. This chain is Phospholipase C (plc), found in Clostridium perfringens (strain 13 / Type A).